The sequence spans 71 residues: Brevinin-1SN2 (71 aa).

Residues 1-22 (MFTMKKSLLLIFFLGTINLSLC) form the signal peptide. Residues 23-45 (EEERNADEDEKRDGDDESDVEVQ) constitute a propeptide, removed in mature form. Cysteines 65 and 71 form a disulfide.

The protein belongs to the frog skin active peptide (FSAP) family. Brevinin subfamily. As to expression, expressed by the skin glands.

It is found in the secreted. Functionally, antimicrobial peptide. Active against a variety of Gram-negative and Gram-positive bacterial strains. Active against fungus C.glabrata 090902 and C.albicans ATCC 10231. Shows hemolytic activity against human erythrocytes. This Sylvirana spinulosa (Fine-spined frog) protein is Brevinin-1SN2.